The sequence spans 35 residues: Turripeptide gsp9a (35 aa).

4-hydroxyproline is present on residues proline 3 and proline 4. Cystine bridges form between cysteine 7-cysteine 22, cysteine 12-cysteine 26, and cysteine 18-cysteine 33. A 4-carboxyglutamate mark is found at glutamate 14 and glutamate 17.

As to expression, expressed by the venom duct.

Its subcellular location is the secreted. The chain is Turripeptide gsp9a from Gemmula speciosa (Splendid gem-turris).